The chain runs to 235 residues: Glycerol-3-phosphate acyltransferase (235 aa).

The next 6 membrane-spanning stretches (helical) occupy residues 4–24, 56–76, 90–110, 126–146, 152–172, and 191–211; these read LIVI…IIAG, AVTL…VVFF, VALR…TVFA, FGIA…TIFV, VASI…KYLF, and IHDS…FAII.

This sequence belongs to the PlsY family. In terms of assembly, probably interacts with PlsX.

It localises to the cell inner membrane. The catalysed reaction is an acyl phosphate + sn-glycerol 3-phosphate = a 1-acyl-sn-glycero-3-phosphate + phosphate. Its pathway is lipid metabolism; phospholipid metabolism. Functionally, catalyzes the transfer of an acyl group from acyl-phosphate (acyl-PO(4)) to glycerol-3-phosphate (G3P) to form lysophosphatidic acid (LPA). This enzyme utilizes acyl-phosphate as fatty acyl donor, but not acyl-CoA or acyl-ACP. The chain is Glycerol-3-phosphate acyltransferase from Prosthecochloris aestuarii (strain DSM 271 / SK 413).